Reading from the N-terminus, the 98-residue chain is DNA-binding protein Fis (98 aa).

Residues Gln74 to Lys93 constitute a DNA-binding region (H-T-H motif).

The protein belongs to the transcriptional regulatory Fis family. Homodimer.

Its function is as follows. Activates ribosomal RNA transcription. Plays a direct role in upstream activation of rRNA promoters. This chain is DNA-binding protein Fis, found in Pectobacterium atrosepticum (strain SCRI 1043 / ATCC BAA-672) (Erwinia carotovora subsp. atroseptica).